The sequence spans 207 residues: Large ribosomal subunit protein bL20 (207 aa).

Positions 117–161 (QETQPQPEEKTSLQPEKVLSTELSEEKSDDTLETKPQTTQVKAKK) are disordered. Over residues 140-149 (SEEKSDDTLE) the composition is skewed to basic and acidic residues.

It belongs to the bacterial ribosomal protein bL20 family.

Functionally, binds directly to 23S ribosomal RNA and is necessary for the in vitro assembly process of the 50S ribosomal subunit. It is not involved in the protein synthesizing functions of that subunit. The polypeptide is Large ribosomal subunit protein bL20 (Onion yellows phytoplasma (strain OY-M)).